A 367-amino-acid polypeptide reads, in one-letter code: Peptide chain release factor 2 (367 aa).

Position 254 is an N5-methylglutamine (Gln-254).

The protein belongs to the prokaryotic/mitochondrial release factor family. Post-translationally, methylated by PrmC. Methylation increases the termination efficiency of RF2.

The protein localises to the cytoplasm. Peptide chain release factor 2 directs the termination of translation in response to the peptide chain termination codons UGA and UAA. The protein is Peptide chain release factor 2 of Bordetella bronchiseptica (strain ATCC BAA-588 / NCTC 13252 / RB50) (Alcaligenes bronchisepticus).